The chain runs to 447 residues: MREIVHVQAGQCGNQIGSKFWEVISDEHGIDPTGRYHGDSDLQLERINCYFNEATAGRYVPRAILMDLEPGTMDSVRAGPFGQLFRPDNFVFGQTGAGNNWAKGHYTEGAELIDSVLDVVRKEAESCDALQGFQLTHSMGGGTGAGMGTLLISKVREEYPDRIMSTYSVIPSPKVSDTVVEPYNATLSVHQLVENADQCFTLDNEALYDICFRTLKLTTPTYGDLNHLVSAAICGTTCSLRFPGQLNCDLRKLAVNMVPFPRLHFFMIGFAPLTSRGSQQYRALTVPELTQQCFDSKNMMCAADPRHGRYLTCAVMFRGRMSTKEVDEQMLNVVNKNSSYFVEWIPNNVKASICDIPPKGLKMSTTFVGNTTAIQEVWKRVAEQFTAMFRRKAFLHWYTGEGMDEMEFTEAESNMNDLVSEYQQYQDATAEEEGEFDEDEELDDGMM.

GTP contacts are provided by Gln11, Glu69, Ser138, Gly142, Thr143, Gly144, Asn204, and Asn226. Position 69 (Glu69) interacts with Mg(2+). A disordered region spans residues 426–447; that stretch reads QDATAEEEGEFDEDEELDDGMM. Positions 429-447 are enriched in acidic residues; that stretch reads TAEEEGEFDEDEELDDGMM.

This sequence belongs to the tubulin family. In terms of assembly, dimer of alpha and beta chains. A typical microtubule is a hollow water-filled tube with an outer diameter of 25 nm and an inner diameter of 15 nM. Alpha-beta heterodimers associate head-to-tail to form protofilaments running lengthwise along the microtubule wall with the beta-tubulin subunit facing the microtubule plus end conferring a structural polarity. Microtubules usually have 13 protofilaments but different protofilament numbers can be found in some organisms and specialized cells. Mg(2+) is required as a cofactor.

The protein resides in the cytoplasm. Its subcellular location is the cytoskeleton. Tubulin is the major constituent of microtubules, a cylinder consisting of laterally associated linear protofilaments composed of alpha- and beta-tubulin heterodimers. Microtubules grow by the addition of GTP-tubulin dimers to the microtubule end, where a stabilizing cap forms. Below the cap, tubulin dimers are in GDP-bound state, owing to GTPase activity of alpha-tubulin. This Ectocarpus variabilis (Brown alga) protein is Tubulin beta-6 chain (TUBB6).